The sequence spans 338 residues: Ribosomal RNA small subunit methyltransferase C (338 aa).

It belongs to the methyltransferase superfamily. RsmC family. Monomer.

It localises to the cytoplasm. It carries out the reaction guanosine(1207) in 16S rRNA + S-adenosyl-L-methionine = N(2)-methylguanosine(1207) in 16S rRNA + S-adenosyl-L-homocysteine + H(+). Functionally, specifically methylates the guanine in position 1207 of 16S rRNA in the 30S particle. The polypeptide is Ribosomal RNA small subunit methyltransferase C (Buchnera aphidicola subsp. Acyrthosiphon pisum (strain APS) (Acyrthosiphon pisum symbiotic bacterium)).